A 681-amino-acid chain; its full sequence is Spermatogenesis-associated protein 21 (681 aa).

The segment covering methionine 1–alanine 14 has biased composition (basic and acidic residues). 2 disordered regions span residues methionine 1–arginine 284 and glutamate 298–leucine 336. Composition is skewed to polar residues over residues glutamine 83–aspartate 94 and proline 159–serine 173. Residues proline 251–leucine 261 show a composition bias toward basic and acidic residues. The segment covering glycine 264–alanine 281 has biased composition (polar residues). Positions threonine 319–threonine 335 are enriched in low complexity. The EF-hand domain occupies phenylalanine 464–phenylalanine 499. Ca(2+) contacts are provided by aspartate 477, asparagine 479, aspartate 481, histidine 483, and aspartate 488. Positions leucine 653–histidine 681 are disordered. The span at serine 662–lysine 671 shows a compositional bias: basic and acidic residues.

Involved in the differentiation of haploid spermatids. In Mus musculus (Mouse), this protein is Spermatogenesis-associated protein 21 (Spata21).